A 199-amino-acid chain; its full sequence is Recombination protein RecR (199 aa).

The segment at 56 to 71 (CAVCGNIAEETQCRIC) adopts a C4-type zinc-finger fold. The region spanning 79–174 (TVICVVEEPK…KVTRLASGLP (96 aa)) is the Toprim domain.

It belongs to the RecR family.

In terms of biological role, may play a role in DNA repair. It seems to be involved in an RecBC-independent recombinational process of DNA repair. It may act with RecF and RecO. This chain is Recombination protein RecR, found in Thermobifida fusca (strain YX).